Consider the following 106-residue polypeptide: Large ribosomal subunit protein eL42 (106 aa).

Residues 34 to 53 (YAQGKRRYDRKQSGYGGQTK) form a disordered region.

It belongs to the eukaryotic ribosomal protein eL42 family. As to quaternary structure, component of the large ribosomal subunit.

It localises to the cytoplasm. Functionally, component of the large ribosomal subunit. The ribosome is a large ribonucleoprotein complex responsible for the synthesis of proteins in the cell. The polypeptide is Large ribosomal subunit protein eL42 (Rpl36a) (Canis lupus familiaris (Dog)).